Consider the following 137-residue polypeptide: Transcription antitermination protein NusB (137 aa).

This sequence belongs to the NusB family.

In terms of biological role, involved in transcription antitermination. Required for transcription of ribosomal RNA (rRNA) genes. Binds specifically to the boxA antiterminator sequence of the ribosomal RNA (rrn) operons. This chain is Transcription antitermination protein NusB, found in Haemophilus ducreyi (strain 35000HP / ATCC 700724).